A 197-amino-acid polypeptide reads, in one-letter code: Imidazoleglycerol-phosphate dehydratase (197 aa).

The protein belongs to the imidazoleglycerol-phosphate dehydratase family.

The protein localises to the cytoplasm. It catalyses the reaction D-erythro-1-(imidazol-4-yl)glycerol 3-phosphate = 3-(imidazol-4-yl)-2-oxopropyl phosphate + H2O. It participates in amino-acid biosynthesis; L-histidine biosynthesis; L-histidine from 5-phospho-alpha-D-ribose 1-diphosphate: step 6/9. The chain is Imidazoleglycerol-phosphate dehydratase from Bradyrhizobium diazoefficiens (strain JCM 10833 / BCRC 13528 / IAM 13628 / NBRC 14792 / USDA 110).